The chain runs to 73 residues: uncharacterized protein (73 aa).

This is an uncharacterized protein from Treponema pallidum (strain Nichols).